A 403-amino-acid polypeptide reads, in one-letter code: D-mannonate dehydratase (403 aa).

Residues asparagine 38 and histidine 123 each coordinate substrate. Tyrosine 160 functions as the Proton donor/acceptor in the catalytic mechanism. Aspartate 211 contributes to the Mg(2+) binding site. Catalysis depends on histidine 213, which acts as the Proton donor/acceptor. Residues glutamate 237 and glutamate 263 each coordinate Mg(2+). Positions 263, 284, 313, 317, and 340 each coordinate substrate.

It belongs to the mandelate racemase/muconate lactonizing enzyme family. GalD subfamily. The cofactor is Mg(2+).

It carries out the reaction D-mannonate = 2-dehydro-3-deoxy-D-gluconate + H2O. Its pathway is carbohydrate metabolism; pentose and glucuronate interconversion. Catalyzes the dehydration of D-mannonate. Has no detectable activity with a panel of 70 other acid sugars (in vitro). The protein is D-mannonate dehydratase of Sphingomonas sp. (strain SKA58).